Reading from the N-terminus, the 94-residue chain is Small ribosomal subunit protein bS6 (94 aa).

It belongs to the bacterial ribosomal protein bS6 family.

Binds together with bS18 to 16S ribosomal RNA. This chain is Small ribosomal subunit protein bS6, found in Clostridium botulinum (strain Loch Maree / Type A3).